The following is a 302-amino-acid chain: Sulfate adenylyltransferase subunit 2 (302 aa).

This sequence belongs to the PAPS reductase family. CysD subfamily. As to quaternary structure, heterodimer composed of CysD, the smaller subunit, and CysN.

The enzyme catalyses sulfate + ATP + H(+) = adenosine 5'-phosphosulfate + diphosphate. It participates in sulfur metabolism; hydrogen sulfide biosynthesis; sulfite from sulfate: step 1/3. In terms of biological role, with CysN forms the ATP sulfurylase (ATPS) that catalyzes the adenylation of sulfate producing adenosine 5'-phosphosulfate (APS) and diphosphate, the first enzymatic step in sulfur assimilation pathway. APS synthesis involves the formation of a high-energy phosphoric-sulfuric acid anhydride bond driven by GTP hydrolysis by CysN coupled to ATP hydrolysis by CysD. This is Sulfate adenylyltransferase subunit 2 from Sodalis glossinidius (strain morsitans).